Here is a 121-residue protein sequence, read N- to C-terminus: MSKDQIIEAIKEMTVLELNDLVKAIEEEFGVTAAAPVAVAGGAAAEGGAAEKTEFDVVLESAGGSKINVIKVVREITGLGLKEAKALVDGAPAPIKEGVAKEEAEEMKAKLEEAGASVELK.

Belongs to the bacterial ribosomal protein bL12 family. In terms of assembly, homodimer. Part of the ribosomal stalk of the 50S ribosomal subunit. Forms a multimeric L10(L12)X complex, where L10 forms an elongated spine to which 2 to 4 L12 dimers bind in a sequential fashion. Binds GTP-bound translation factors.

Forms part of the ribosomal stalk which helps the ribosome interact with GTP-bound translation factors. Is thus essential for accurate translation. The protein is Large ribosomal subunit protein bL12 of Halalkalibacterium halodurans (strain ATCC BAA-125 / DSM 18197 / FERM 7344 / JCM 9153 / C-125) (Bacillus halodurans).